We begin with the raw amino-acid sequence, 184 residues long: GTP cyclohydrolase 1 (184 aa).

Residues C75, H78, and C146 each coordinate Zn(2+).

It belongs to the GTP cyclohydrolase I family. As to quaternary structure, toroid-shaped homodecamer, composed of two pentamers of five dimers.

The enzyme catalyses GTP + H2O = 7,8-dihydroneopterin 3'-triphosphate + formate + H(+). Its pathway is cofactor biosynthesis; 7,8-dihydroneopterin triphosphate biosynthesis; 7,8-dihydroneopterin triphosphate from GTP: step 1/1. The chain is GTP cyclohydrolase 1 from Streptococcus sanguinis (strain SK36).